Here is a 308-residue protein sequence, read N- to C-terminus: Cell division protein FtsX (308 aa).

At 1 to 24 (MISRFFRHLFEALKSLKRNGWMTV) the chain is on the extracellular side. Residues 25–45 (AAVSSVMITLTLVAIFASVIF) form a helical membrane-spanning segment. The Cytoplasmic portion of the chain corresponds to 46-178 (NTAKLATDIE…NTERLFKLAS (133 aa)). The helical transmembrane segment at 179-199 (FIRVWGLGIAALLIFIAAFLI) threads the bilayer. The Extracellular portion of the chain corresponds to 200 to 236 (SNTIRITIISRSREIQIMRLVGAKNSYIRGPFLLEGA). Residues 237-257 (FIGLLGAIAPSVLVFIVYQIV) form a helical membrane-spanning segment. The Cytoplasmic segment spans residues 258–276 (YQSVNKSLVGQNLSMISPD). A helical transmembrane segment spans residues 277 to 297 (LFSPLMIALLFVIGVFIGSLG). Over 298 to 308 (SGISMRRFLKI) the chain is Extracellular.

Belongs to the ABC-4 integral membrane protein family. FtsX subfamily. In terms of assembly, interacts with FtsE. Interacts (via large extracellular loop) with PcsB (via N-terminal coiled coil domain). This interaction directs PcsB to equatorial and septal sites of dividing cells.

It is found in the cell membrane. Functionally, part of the ABC transporter FtsEX involved in asymmetric cellular division facilitating the initiation of sporulation. Required in maintaining normal growth and cellular morphology. The polypeptide is Cell division protein FtsX (Streptococcus pneumoniae (strain ATCC BAA-255 / R6)).